Reading from the N-terminus, the 192-residue chain is Ras-like protein RAS2 (192 aa).

Position 15–22 (15–22 (GGGGVGKS)) interacts with GTP. The Effector region signature appears at 37 to 45 (YDPTIEDSY). GTP is bound by residues 62 to 66 (DTAGQ) and 121 to 124 (NKSD). Cys-189 carries the cysteine methyl ester modification. A lipid anchor (S-geranylgeranyl cysteine) is attached at Cys-189. Positions 190 to 192 (IVL) are cleaved as a propeptide — removed in mature form.

This sequence belongs to the small GTPase superfamily. Ras family.

The protein resides in the cell membrane. The catalysed reaction is GTP + H2O = GDP + phosphate + H(+). With respect to regulation, alternates between an inactive form bound to GDP and an active form bound to GTP. Activated by a guanine nucleotide-exchange factor (GEF) and inactivated by a GTPase-activating protein (GAP). Its function is as follows. Ras proteins bind GDP/GTP and possess intrinsic GTPase activity. In Hydra vulgaris (Hydra), this protein is Ras-like protein RAS2 (RAS2).